We begin with the raw amino-acid sequence, 467 residues long: 3-isopropylmalate dehydratase large subunit (467 aa).

Positions 347, 407, and 410 each coordinate [4Fe-4S] cluster.

The protein belongs to the aconitase/IPM isomerase family. LeuC type 1 subfamily. As to quaternary structure, heterodimer of LeuC and LeuD. [4Fe-4S] cluster is required as a cofactor.

It carries out the reaction (2R,3S)-3-isopropylmalate = (2S)-2-isopropylmalate. It functions in the pathway amino-acid biosynthesis; L-leucine biosynthesis; L-leucine from 3-methyl-2-oxobutanoate: step 2/4. Functionally, catalyzes the isomerization between 2-isopropylmalate and 3-isopropylmalate, via the formation of 2-isopropylmaleate. This Crocosphaera subtropica (strain ATCC 51142 / BH68) (Cyanothece sp. (strain ATCC 51142)) protein is 3-isopropylmalate dehydratase large subunit.